The sequence spans 327 residues: Thioredoxin reductase (327 aa).

FAD is bound by residues 10-13 (SGPA), 39-40 (IA), Q44, N53, V86, C143, D286, and 293-295 (RQA). The cysteines at positions 140 and 143 are disulfide-linked.

It belongs to the class-II pyridine nucleotide-disulfide oxidoreductase family. Homodimer. FAD serves as cofactor.

Its subcellular location is the cytoplasm. The catalysed reaction is [thioredoxin]-dithiol + NADP(+) = [thioredoxin]-disulfide + NADPH + H(+). Functionally, component of the thioredoxin-thioredoxin reductase system which may be involved in biosynthesis of penicillins and cephalosporins and may be important in determining the thiol-disulfide redox balance. In Pneumocystis jirovecii (Human pneumocystis pneumonia agent), this protein is Thioredoxin reductase (TRR1).